The primary structure comprises 220 residues: Putative phosphatase YhcW (220 aa).

Aspartate 8 functions as the Nucleophile in the catalytic mechanism. 3 residues coordinate a divalent metal cation: aspartate 8, aspartate 10, and aspartate 166. Catalysis depends on aspartate 10, which acts as the Proton donor.

Belongs to the HAD-like hydrolase superfamily. CbbY/CbbZ/Gph/YieH family. A divalent metal cation is required as a cofactor.

The sequence is that of Putative phosphatase YhcW (yhcW) from Bacillus subtilis (strain 168).